A 136-amino-acid polypeptide reads, in one-letter code: Mite allergen Der f 21.0101 (136 aa).

The N-terminal stretch at 1-17 (MKFIIFCAIVMAVSVSG) is a signal peptide.

This sequence belongs to the mite group 5 allergen family. As to quaternary structure, monomer. Homodimer. Highly expressed in foregut (stomach), midgut and hindgut. Not expressed in body wall, reproductive system or body cavity.

The chain is Mite allergen Der f 21.0101 from Dermatophagoides farinae (American house dust mite).